We begin with the raw amino-acid sequence, 163 residues long: Probable phosphotransferase enzyme IIB component M6_Spy0801 (163 aa).

One can recognise a PTS EIIB type-4 domain in the interval 1 to 163; it reads MITQIRVDDR…TKVHLSQLVN (163 aa). Residue His-13 is the Pros-phosphohistidine intermediate of the active site.

It localises to the cytoplasm. Its function is as follows. The phosphoenolpyruvate-dependent sugar phosphotransferase system (sugar PTS), a major carbohydrate active -transport system, catalyzes the phosphorylation of incoming sugar substrates concomitantly with their translocation across the cell membrane. The polypeptide is Probable phosphotransferase enzyme IIB component M6_Spy0801 (Streptococcus pyogenes serotype M6 (strain ATCC BAA-946 / MGAS10394)).